We begin with the raw amino-acid sequence, 200 residues long: Peroxiredoxin (200 aa).

In terms of domain architecture, Thioredoxin spans 6-166 (ARIGHLAPGF…ILRLVQAFQF (161 aa)). Catalysis depends on Cys-52, which acts as the Cysteine sulfenic acid (-SOH) intermediate.

Belongs to the peroxiredoxin family. AhpC/Prx1 subfamily. In terms of assembly, homodimer; disulfide-linked, upon oxidation.

It catalyses the reaction a hydroperoxide + [thioredoxin]-dithiol = an alcohol + [thioredoxin]-disulfide + H2O. Functionally, thiol-specific peroxidase that catalyzes the reduction of hydrogen peroxide and organic hydroperoxides to water and alcohols, respectively. Plays a role in cell protection against oxidative stress by detoxifying peroxides and as sensor of hydrogen peroxide-mediated signaling events. The sequence is that of Peroxiredoxin from Oncorhynchus mykiss (Rainbow trout).